The sequence spans 68 residues: Tabimmunregulin 1 (68 aa).

The first 26 residues, 1 to 26, serve as a signal peptide directing secretion; the sequence is MLLKSYVFFLLSLLIVGLFTSRDADA. A propeptide spanning residues 27 to 38 is cleaved from the precursor; sequence QYEDLVTGYLRK.

In terms of tissue distribution, expressed in salivary glands.

The protein resides in the secreted. Its function is as follows. Horsefly salivary gland immunosuppressant protein that likely inhibits the host inflammatory response by regulation of anti- and pro-inflammatory cytokines. When tested on mouse splenocytes in the presence of LPS, it increases the secretion of the proinflammatory cytokine interleukin-10 (IL10) and decreases the secretion of the proinflammatory cytokine interferon-gamma (IFNG) in a dose-dependent manner. The sequence is that of Tabimmunregulin 1 from Tabanus yao (Horsefly).